The chain runs to 524 residues: Probable malate:quinone oxidoreductase (524 aa).

The protein belongs to the MQO family. FAD is required as a cofactor.

It carries out the reaction (S)-malate + a quinone = a quinol + oxaloacetate. The protein operates within carbohydrate metabolism; tricarboxylic acid cycle; oxaloacetate from (S)-malate (quinone route): step 1/1. This is Probable malate:quinone oxidoreductase from Blochmanniella floridana.